The sequence spans 325 residues: Heat-inducible transcription repressor HrcA (325 aa).

It belongs to the HrcA family.

Functionally, negative regulator of class I heat shock genes (grpE-dnaK-dnaJ and groELS operons). Prevents heat-shock induction of these operons. The sequence is that of Heat-inducible transcription repressor HrcA from Staphylococcus aureus (strain USA300).